The chain runs to 390 residues: Ribonucleoside-diphosphate reductase subunit M2 (390 aa).

The residue at position 20 (Ser-20) is a Phosphoserine. Thr-33 carries the post-translational modification Phosphothreonine. The Cy motif lies at 49–51 (RRI). Fe cation is bound by residues Asp-139, Glu-170, and His-173. Residue Tyr-177 is part of the active site. Fe cation-binding residues include Glu-233, Glu-267, and His-270.

The protein belongs to the ribonucleoside diphosphate reductase small chain family. As to quaternary structure, heterodimer of a large and a small subunit. Interacts (via Cy motif and when phosphorylated at Thr-33) with CCNF; the interaction occurs exclusively in G2 and early M. Fe cation serves as cofactor. In terms of processing, phosphorylation on Ser-20 relieves the inhibitory effect on Wnt signaling. Phosphorylated on Thr-33 by CDK1 and CDK2; predominantly in G2 and M phase. Ubiquitinated by the SCF(CCNF) E3 ubiquitin-protein ligase complex; leading to its degradation by the proteasome.

Its subcellular location is the cytoplasm. It localises to the nucleus. It carries out the reaction a 2'-deoxyribonucleoside 5'-diphosphate + [thioredoxin]-disulfide + H2O = a ribonucleoside 5'-diphosphate + [thioredoxin]-dithiol. In terms of biological role, provides the precursors necessary for DNA synthesis. Catalyzes the biosynthesis of deoxyribonucleotides from the corresponding ribonucleotides. Inhibits Wnt signaling. This Rattus norvegicus (Rat) protein is Ribonucleoside-diphosphate reductase subunit M2 (Rrm2).